Here is a 409-residue protein sequence, read N- to C-terminus: Bone morphogenetic protein 4 (409 aa).

Positions 1–24 (MIPGNRMLMVVLLCQVLLGGASHA) are cleaved as a signal peptide. Residues 25–293 (SLIPETGKKK…ALTRRRRAKR (269 aa)) constitute a propeptide that is removed on maturation. Phosphoserine is present on Ser91. Asn144 and Asn209 each carry an N-linked (GlcNAc...) asparagine glycan. The segment at 284 to 308 (ALTRRRRAKRSPKHHPQRARKKNKN) is disordered. Disulfide bonds link Cys309–Cys374, Cys338–Cys406, and Cys342–Cys408. N-linked (GlcNAc...) asparagine glycans are attached at residues Asn351 and Asn366.

This sequence belongs to the TGF-beta family. In terms of assembly, homodimer; disulfide-linked. Interacts with GREM2. Part of a complex consisting of TWSG1 and CHRD. Interacts with the serine proteases, HTRA1 and HTRA3; the interaction with either inhibits BMP4-mediated signaling. The HTRA protease activity is required for this inhibition. Interacts with SOSTDC1. Interacts with FBN1 (via N-terminal domain) and FBN2. Interacts with type I receptor BMPR1A. Interacts with type II receptor BMPR2. Interacts with FSTL1; this interaction inhibits the activation of the BMP4/Smad1/5/8 signaling pathway. Interacts with SCUBE3. Interacts with TGFBR3.

Its subcellular location is the secreted. The protein resides in the extracellular space. It localises to the extracellular matrix. Functionally, growth factor of the TGF-beta superfamily that plays essential roles in many developmental processes, including neurogenesis, vascular development, angiogenesis and osteogenesis. Acts in concert with PTHLH/PTHRP to stimulate ductal outgrowth during embryonic mammary development and to inhibit hair follicle induction. Initiates the canonical BMP signaling cascade by associating with type I receptor BMPR1A and type II receptor BMPR2. Once all three components are bound together in a complex at the cell surface, BMPR2 phosphorylates and activates BMPR1A. In turn, BMPR1A propagates signal by phosphorylating SMAD1/5/8 that travel to the nucleus and act as activators and repressors of transcription of target genes. Positively regulates the expression of odontogenic development regulator MSX1 via inducing the IPO7-mediated import of SMAD1 to the nucleus. Required for MSX1-mediated mesenchymal molar tooth bud development beyond the bud stage, via promoting Wnt signaling. Acts as a positive regulator of odontoblast differentiation during mesenchymal tooth germ formation, expression is repressed during the bell stage by MSX1-mediated inhibition of CTNNB1 signaling. Able to induce its own expression in dental mesenchymal cells and also in the neighboring dental epithelial cells via an MSX1-mediated pathway. Can also signal through non-canonical BMP pathways such as ERK/MAP kinase, PI3K/Akt, or SRC cascades. For example, induces SRC phosphorylation which, in turn, activates VEGFR2, leading to an angiogenic response. The polypeptide is Bone morphogenetic protein 4 (Bos taurus (Bovine)).